The following is a 188-amino-acid chain: Elongation factor P (188 aa).

Belongs to the elongation factor P family.

The protein localises to the cytoplasm. Its pathway is protein biosynthesis; polypeptide chain elongation. In terms of biological role, involved in peptide bond synthesis. Stimulates efficient translation and peptide-bond synthesis on native or reconstituted 70S ribosomes in vitro. Probably functions indirectly by altering the affinity of the ribosome for aminoacyl-tRNA, thus increasing their reactivity as acceptors for peptidyl transferase. This chain is Elongation factor P, found in Anaplasma phagocytophilum (strain HZ).